The primary structure comprises 183 residues: Adenine phosphoribosyltransferase (183 aa).

This sequence belongs to the purine/pyrimidine phosphoribosyltransferase family. Homodimer.

It is found in the cytoplasm. It carries out the reaction AMP + diphosphate = 5-phospho-alpha-D-ribose 1-diphosphate + adenine. Its pathway is purine metabolism; AMP biosynthesis via salvage pathway; AMP from adenine: step 1/1. Catalyzes a salvage reaction resulting in the formation of AMP, that is energically less costly than de novo synthesis. The sequence is that of Adenine phosphoribosyltransferase from Escherichia coli O157:H7.